The sequence spans 275 residues: Putative acyl-[acyl-carrier-protein] desaturase DesA2 (275 aa).

Fe cation contacts are provided by Glu107, His110, Glu159, Glu189, and His192.

Belongs to the fatty acid desaturase type 2 family. In terms of assembly, homodimer. Fe(2+) is required as a cofactor.

It functions in the pathway lipid metabolism; fatty acid metabolism. Its function is as follows. May be a desaturase involved in mycobacterial fatty acid biosynthesis. This is Putative acyl-[acyl-carrier-protein] desaturase DesA2 (desA2) from Mycobacterium tuberculosis (strain CDC 1551 / Oshkosh).